Reading from the N-terminus, the 138-residue chain is Large ribosomal subunit protein bL17 (138 aa).

It belongs to the bacterial ribosomal protein bL17 family. Part of the 50S ribosomal subunit. Contacts protein L32.

This Nitrobacter hamburgensis (strain DSM 10229 / NCIMB 13809 / X14) protein is Large ribosomal subunit protein bL17.